The chain runs to 935 residues: Lon protease homolog 2, peroxisomal (935 aa).

Positions 12–296 (LPVHRLERNL…NLRRLVEEMG (285 aa)) constitute a Lon N-terminal domain. 452–459 (GPPGVGKT) lines the ATP pocket. In terms of domain architecture, Lon proteolytic spans 692 to 922 (QKGYGVVNGL…SDVLASVWEG (231 aa)). Active-site residues include S789 and K832. Positions 933-935 (ARI) match the Microbody targeting signal motif.

This sequence belongs to the peptidase S16 family.

It localises to the peroxisome matrix. It carries out the reaction Hydrolysis of proteins in presence of ATP.. Functionally, ATP-dependent serine protease that mediates the selective degradation of misfolded and unassembled polypeptides in the peroxisomal matrix. Necessary for type 2 peroxisome targeting signal (PTS2)-containing protein processing and facilitates peroxisome matrix protein import. The sequence is that of Lon protease homolog 2, peroxisomal (PLN) from Pichia angusta (Yeast).